The sequence spans 398 residues: 8-amino-7-oxononanoate synthase (398 aa).

Arg23 contacts substrate. 110 to 111 (GY) contacts pyridoxal 5'-phosphate. His135 serves as a coordination point for substrate. The pyridoxal 5'-phosphate site is built by Ser181, His209, and Thr237. Lys240 carries the N6-(pyridoxal phosphate)lysine modification. Thr354 contributes to the substrate binding site.

It belongs to the class-II pyridoxal-phosphate-dependent aminotransferase family. BioF subfamily. In terms of assembly, homodimer. Pyridoxal 5'-phosphate is required as a cofactor.

The catalysed reaction is 6-carboxyhexanoyl-[ACP] + L-alanine + H(+) = (8S)-8-amino-7-oxononanoate + holo-[ACP] + CO2. The protein operates within cofactor biosynthesis; biotin biosynthesis. Its function is as follows. Catalyzes the decarboxylative condensation of pimeloyl-[acyl-carrier protein] and L-alanine to produce 8-amino-7-oxononanoate (AON), [acyl-carrier protein], and carbon dioxide. In Anaeromyxobacter dehalogenans (strain 2CP-1 / ATCC BAA-258), this protein is 8-amino-7-oxononanoate synthase.